A 628-amino-acid chain; its full sequence is Chaperone protein DnaK (628 aa).

Thr-195 bears the Phosphothreonine; by autocatalysis mark. The interval 545 to 628 (QLEENEGAAQ…VIDADFKAAE (84 aa)) is disordered. Over residues 555–591 (DAKDALKAAADEAEEAVRSEDDARIESAQKRLEEELR) the composition is skewed to basic and acidic residues. Positions 596 to 612 (AQQAAGQGQPQGAQAQG) are enriched in low complexity. Basic and acidic residues predominate over residues 614–628 (KADDDVIDADFKAAE).

Belongs to the heat shock protein 70 family.

Its function is as follows. Acts as a chaperone. In Deinococcus deserti (strain DSM 17065 / CIP 109153 / LMG 22923 / VCD115), this protein is Chaperone protein DnaK.